Consider the following 233-residue polypeptide: Putative N-acetylmannosamine-6-phosphate 2-epimerase (233 aa).

The protein belongs to the NanE family.

The catalysed reaction is an N-acyl-D-glucosamine 6-phosphate = an N-acyl-D-mannosamine 6-phosphate. Its pathway is amino-sugar metabolism; N-acetylneuraminate degradation; D-fructose 6-phosphate from N-acetylneuraminate: step 3/5. Converts N-acetylmannosamine-6-phosphate (ManNAc-6-P) to N-acetylglucosamine-6-phosphate (GlcNAc-6-P). This Yersinia pseudotuberculosis serotype O:3 (strain YPIII) protein is Putative N-acetylmannosamine-6-phosphate 2-epimerase.